Reading from the N-terminus, the 442-residue chain is Citrate synthase (442 aa).

Active-site residues include H274, H320, and D375.

It belongs to the citrate synthase family.

The catalysed reaction is oxaloacetate + acetyl-CoA + H2O = citrate + CoA + H(+). Its pathway is carbohydrate metabolism; tricarboxylic acid cycle; isocitrate from oxaloacetate: step 1/2. Catalyzes both citrate generation and citrate cleavage. Part of a reversible tricarboxylic acid (TCA) cycle that can fix carbon dioxide autotrophically and may represent an ancestral mode of the conventional reductive TCA (rTCA) cycle. The direction is controlled by the available carbon source(s). In Thermosulfidibacter takaii (strain DSM 17441 / JCM 13301 / NBRC 103674 / ABI70S6), this protein is Citrate synthase.